Reading from the N-terminus, the 162-residue chain is NADH-quinone oxidoreductase subunit I (162 aa).

4Fe-4S ferredoxin-type domains are found at residues 53–83 (LRRY…IESE) and 93–122 (TRYD…EGPN). The [4Fe-4S] cluster site is built by Cys63, Cys66, Cys69, Cys73, Cys102, Cys105, Cys108, and Cys112.

This sequence belongs to the complex I 23 kDa subunit family. As to quaternary structure, NDH-1 is composed of 14 different subunits. Subunits NuoA, H, J, K, L, M, N constitute the membrane sector of the complex. [4Fe-4S] cluster serves as cofactor.

The protein resides in the cell inner membrane. The catalysed reaction is a quinone + NADH + 5 H(+)(in) = a quinol + NAD(+) + 4 H(+)(out). In terms of biological role, NDH-1 shuttles electrons from NADH, via FMN and iron-sulfur (Fe-S) centers, to quinones in the respiratory chain. The immediate electron acceptor for the enzyme in this species is believed to be ubiquinone. Couples the redox reaction to proton translocation (for every two electrons transferred, four hydrogen ions are translocated across the cytoplasmic membrane), and thus conserves the redox energy in a proton gradient. In Erythrobacter litoralis (strain HTCC2594), this protein is NADH-quinone oxidoreductase subunit I.